The following is a 1175-amino-acid chain: MAKPYEFNWQKEVPSFLQEGAVFDRYEEESFVFEPNCLFKVDEFGFFLTWKSEGKEGQVLECSLINSIRLAAIPKDPKILAALESVGKSENDLEGRILCVCSGTDLVNIGFTYMVAENPEITKQWVEGLRSIIHNFRANNVSPMTCLKKHWMKLAFLTNTSGKIPVRSITRTFASGKTEKVIFQALKELGLPSGKNDEIEPAAFTYEKFYELTQKICPRTDIEDLFKKINGDKTDYLTVDQLVSFLNEHQRDPRLNEILFPFYDAKRAMQIIEMYEPDEELKKKGLISSDGFCRYLMSDENAPVFLDRLELYQEMDHPLAHYFISSSHNTYLTGRQFGGKSSVEMYRQVLLAGCRCVELDCWDGKGEDQEPIITHGKAMCTDILFKDVIQAIKETAFVTSEYPVILSFENHCSKYQQYQMSKYCEDLFGDLLLKQALESHPLEPGRLLPSPNDLKRKILIKNKRLKPEVEKKQLEALKSMMEAGESAAPASILEDDNEEEIESADQEEEAHPEYKFGNELSADDFSHKEAVANSVKKGLVTVEDEQAWMASYKYVGATTNIHPYLSTMINYAQPVKFQGFHVAEERNIHYNMSSFNESVGLGYLKTHAIEFVNYNKRQMSRIYPKGGRVDSSNYMPQIFWNAGCQMVSLNYQTPDLAMQLNQGKFEYNGSCGYLLKPDFMRRPDRTFDPFSETPVDGVIAATCSVQVISGQFLSDKKIGTYVEVDMYGLPTDTIRKEFRTRMVMNNGLNPVYNEESFVFRKVILPDLAVLRIAVYDDNNKLIGQRILPLDGLQAGYRHISLRNEGNKPLSLPTIFCNIVLKTYVPDGFGDIVDALSDPKKFLSITEKRADQLRAMGIETSDIADVPSDTSKNDKKGKANPAKANVTPQSSSELRPTTTAALGSGQEAKKGIELIPQVRIEDLKQMKAYLKHLKKQQKELNSLKKKHAKEHSTMQKLHCTQVDKIVAQYDKEKSTHEKILEKAMKKKGGSNCLEIKKETEIKIQTLTSDHKSKVKEIVAQHTKEWSEMINTHSAEEQEIRDLHLSQQCELLRKLLINAHEQQTQQLKLSHDRESKEMRAHQAKISMENSKAISQDKSIKNKAERERRVRELNSSNTKKFLEERKRLAMKQSKEMDQLKKVQLEHLEFLEKQNEQAKEMQQMVKLEAEMDRRPATVV.

N-acetylalanine is present on Ala-2. Residues 313–463 (QEMDHPLAHY…LKRKILIKNK (151 aa)) form the PI-PLC X-box domain. Catalysis depends on residues His-328 and His-375. The interval 487–512 (AAPASILEDDNEEEIESADQEEEAHP) is disordered. Acidic residues predominate over residues 493 to 508 (LEDDNEEEIESADQEE). Residues 565 to 681 (LSTMINYAQP…GYLLKPDFMR (117 aa)) form the PI-PLC Y-box domain. A C2 domain is found at 684–809 (DRTFDPFSET…SLRNEGNKPL (126 aa)). 2 disordered regions span residues 860–904 (SDIA…LGSG) and 1082–1110 (KISM…VREL). Polar residues-rich tracts occupy residues 885 to 900 (VTPQ…TTAA) and 1085 to 1094 (MENSKAISQD). Thr-886 carries the post-translational modification Phosphothreonine. A compositionally biased stretch (basic and acidic residues) spans 1095–1109 (KSIKNKAERERRVRE).

Requires Ca(2+) as cofactor. As to expression, preferentially expressed in the retina.

The protein localises to the cell membrane. It carries out the reaction a 1,2-diacyl-sn-glycero-3-phospho-(1D-myo-inositol-4,5-bisphosphate) + H2O = 1D-myo-inositol 1,4,5-trisphosphate + a 1,2-diacyl-sn-glycerol + H(+). The catalysed reaction is a 1,2-diacyl-sn-glycero-3-phospho-(1D-myo-inositol) + H2O = 1D-myo-inositol 1-phosphate + a 1,2-diacyl-sn-glycerol + H(+). Activated phosphatidylinositol-specific phospholipase C enzymes catalyze the production of the second messenger molecules diacylglycerol (DAG) and inositol 1,4,5-trisphosphate (IP3) involved in G-protein coupled receptor signaling pathways. PLCB4 is a direct effector of the endothelin receptor signaling pathway that plays an essential role in lower jaw and middle ear structures development. The sequence is that of 1-phosphatidylinositol 4,5-bisphosphate phosphodiesterase beta-4 from Rattus norvegicus (Rat).